The sequence spans 361 residues: tRNA-specific 2-thiouridylase MnmA (361 aa).

Residues 11-18 (GMSGGVDS) and Met-37 each bind ATP. The active-site Nucleophile is Cys-106. A disulfide bond links Cys-106 and Cys-202. Gly-130 contributes to the ATP binding site. The interval 152–154 (KDQ) is interaction with tRNA. Cys-202 (cysteine persulfide intermediate) is an active-site residue. Residues 308 to 309 (RY) form an interaction with tRNA region.

This sequence belongs to the MnmA/TRMU family.

It localises to the cytoplasm. The enzyme catalyses S-sulfanyl-L-cysteinyl-[protein] + uridine(34) in tRNA + AH2 + ATP = 2-thiouridine(34) in tRNA + L-cysteinyl-[protein] + A + AMP + diphosphate + H(+). Its function is as follows. Catalyzes the 2-thiolation of uridine at the wobble position (U34) of tRNA, leading to the formation of s(2)U34. This chain is tRNA-specific 2-thiouridylase MnmA, found in Clostridium botulinum (strain Eklund 17B / Type B).